Here is a 243-residue protein sequence, read N- to C-terminus: UMP-CMP kinase 1 (243 aa).

29 to 34 (GSGKGT) is a binding site for ATP. The tract at residues 49–78 (SAGDLLREEAKYDTEQGTMIKNLMNEGKLV) is NMP. A ribonucleoside 5'-phosphate-binding positions include Arg-55, 76-78 (KLV), and 103-106 (GFPR). Position 110 (Asn-110) interacts with CMP. Positions 141-149 (NRNQGRDDD) are LID. Arg-142 contacts ATP. Residues Arg-146 and Arg-157 each coordinate a ribonucleoside 5'-phosphate. Residue Arg-185 participates in ATP binding.

Belongs to the adenylate kinase family. UMP-CMP kinase subfamily. Monomer. Mg(2+) is required as a cofactor.

Its subcellular location is the cytoplasm. The protein localises to the nucleus. The catalysed reaction is UMP + ATP = UDP + ADP. The enzyme catalyses CMP + ATP = CDP + ADP. It catalyses the reaction dCMP + ATP = dCDP + ADP. Its function is as follows. Catalyzes the phosphorylation of pyrimidine nucleoside monophosphates at the expense of ATP. Plays an important role in de novo pyrimidine nucleotide biosynthesis. Has preference for UMP and CMP as phosphate acceptors. The protein is UMP-CMP kinase 1 of Oryza sativa subsp. japonica (Rice).